A 246-amino-acid chain; its full sequence is Type III pantothenate kinase (246 aa).

6–13 serves as a coordination point for ATP; sequence DVGNTHSV. 103 to 106 is a substrate binding site; the sequence is GADR. Residue Asp-105 is the Proton acceptor of the active site. Residue Asp-125 coordinates K(+). ATP is bound at residue Thr-128. Residue Thr-179 coordinates substrate.

This sequence belongs to the type III pantothenate kinase family. Homodimer. The cofactor is NH4(+). Requires K(+) as cofactor.

Its subcellular location is the cytoplasm. It carries out the reaction (R)-pantothenate + ATP = (R)-4'-phosphopantothenate + ADP + H(+). The protein operates within cofactor biosynthesis; coenzyme A biosynthesis; CoA from (R)-pantothenate: step 1/5. Catalyzes the phosphorylation of pantothenate (Pan), the first step in CoA biosynthesis. This chain is Type III pantothenate kinase (coaX), found in Thermotoga maritima (strain ATCC 43589 / DSM 3109 / JCM 10099 / NBRC 100826 / MSB8).